A 196-amino-acid chain; its full sequence is Phosphoheptose isomerase (196 aa).

In terms of domain architecture, SIS spans 38 to 196 (LIAGYRAGAR…VEHALFAPRQ (159 aa)). Substrate is bound at residue 53-55 (NGG). Zn(2+)-binding residues include H62 and E66. Residues E66, 95–96 (ND), 121–123 (STS), S126, and Q173 each bind substrate. Zn(2+) contacts are provided by Q173 and H181.

This sequence belongs to the SIS family. GmhA subfamily. Zn(2+) is required as a cofactor.

The protein resides in the cytoplasm. The catalysed reaction is 2 D-sedoheptulose 7-phosphate = D-glycero-alpha-D-manno-heptose 7-phosphate + D-glycero-beta-D-manno-heptose 7-phosphate. Its pathway is carbohydrate biosynthesis; D-glycero-D-manno-heptose 7-phosphate biosynthesis; D-glycero-alpha-D-manno-heptose 7-phosphate and D-glycero-beta-D-manno-heptose 7-phosphate from sedoheptulose 7-phosphate: step 1/1. Catalyzes the isomerization of sedoheptulose 7-phosphate in D-glycero-D-manno-heptose 7-phosphate. In Mycobacterium bovis (strain ATCC BAA-935 / AF2122/97), this protein is Phosphoheptose isomerase.